Consider the following 344-residue polypeptide: Heat-inducible transcription repressor HrcA (344 aa).

Belongs to the HrcA family.

Functionally, negative regulator of class I heat shock genes (grpE-dnaK-dnaJ and groELS operons). Prevents heat-shock induction of these operons. In Streptococcus pyogenes serotype M1, this protein is Heat-inducible transcription repressor HrcA.